We begin with the raw amino-acid sequence, 340 residues long: Biotin synthase (340 aa).

A Radical SAM core domain is found at 45 to 272; sequence NAVQVSTLLS…ASYVRLSAGR (228 aa). [4Fe-4S] cluster is bound by residues Cys60, Cys64, and Cys67. [2Fe-2S] cluster contacts are provided by Cys104, Cys135, Cys195, and Arg267.

It belongs to the radical SAM superfamily. Biotin synthase family. In terms of assembly, homodimer. It depends on [4Fe-4S] cluster as a cofactor. The cofactor is [2Fe-2S] cluster.

It catalyses the reaction (4R,5S)-dethiobiotin + (sulfur carrier)-SH + 2 reduced [2Fe-2S]-[ferredoxin] + 2 S-adenosyl-L-methionine = (sulfur carrier)-H + biotin + 2 5'-deoxyadenosine + 2 L-methionine + 2 oxidized [2Fe-2S]-[ferredoxin]. It functions in the pathway cofactor biosynthesis; biotin biosynthesis; biotin from 7,8-diaminononanoate: step 2/2. Its function is as follows. Catalyzes the conversion of dethiobiotin (DTB) to biotin by the insertion of a sulfur atom into dethiobiotin via a radical-based mechanism. This chain is Biotin synthase, found in Thioalkalivibrio sulfidiphilus (strain HL-EbGR7).